Here is a 296-residue protein sequence, read N- to C-terminus: PYK10-binding protein 2 (296 aa).

The tract at residues 1–20 is disordered; it reads MAQKVEAKGGKGGNQWDDGS. Residue Ala2 is modified to N-acetylalanine. 2 consecutive Jacalin-type lectin domains span residues 2–142 and 150–293; these read AQKV…YFAP and AKPL…HVRP.

The protein belongs to the jacalin lectin family. In terms of assembly, component of the PYK10 complex, at least composed of PYK10/BGLU23, BGLU21, BGLU22, JAL22, JAL23, PBP1/JAL30, PBP2/JAL31, JAL32, JAL33, JAL34, JAL35, GLL22 and GLL23.

Polymerizer-type lectin that may facilitate the correct polymerization of BGLU23/PYK10 upon tissue damage. Activates BGLU21, BGLU22 and BGLU23. In Arabidopsis thaliana (Mouse-ear cress), this protein is PYK10-binding protein 2 (PBP2).